Here is a 228-residue protein sequence, read N- to C-terminus: Small ribosomal subunit protein uS3 (228 aa).

Residues 39 to 107 (TREYLQDKLK…PVHINIEEIR (69 aa)) form the KH type-2 domain.

The protein belongs to the universal ribosomal protein uS3 family. In terms of assembly, part of the 30S ribosomal subunit. Forms a tight complex with proteins S10 and S14.

Its function is as follows. Binds the lower part of the 30S subunit head. Binds mRNA in the 70S ribosome, positioning it for translation. The sequence is that of Small ribosomal subunit protein uS3 from Pseudomonas entomophila (strain L48).